Here is a 276-residue protein sequence, read N- to C-terminus: Short-chain dehydrogenase/reductase ATR10 (276 aa).

Residues I29, S51, D78, and N105 each coordinate NADP(+). S161 (proton donor) is an active-site residue. Residues K185 and T214 each coordinate NADP(+). K185 acts as the Lowers pKa of active site Tyr in catalysis.

Belongs to the short-chain dehydrogenases/reductases (SDR) family.

Its pathway is mycotoxin biosynthesis. In terms of biological role, short-chain dehydrogenase/reductase; part of the core atranone cluster (CAC) which products are predicted to catalyze most or all steps of mycotoxin atranone synthesis, starting from geranylgeranyl pyrophosphate (GGPP). The initial cyclization of GGPP to dolabellane is probably performed by the terpene cyclase ATR13. The Baeyer-Villiger oxidation near the end of the atranone synthesis, which converts atranones D and E to atranones F and G is predicted to be catalyzed by the monooxygenase ATR8. Of the CAC's other predicted gene products, the reducing PKS ATR6 might synthesize a polyketide chain. This polyketide is probably transferred onto the atranone backbone by the polyketide transferase ATR5. Other predicted CAC products include 4 oxygenases (ATR2, ATR3, ATR4, and ATR14), 3 short-chain reductases (ATR7, ATR9, and ATR10), and a methyltransferase (ATR12). These may all be involved in the various steps of atranone biosynthesis, although their specific roles must await experimental determination. In Stachybotrys chlorohalonatus (strain IBT 40285), this protein is Short-chain dehydrogenase/reductase ATR10.